The chain runs to 257 residues: Flavin-dependent thymidylate synthase (257 aa).

The ThyX domain occupies 1 to 202 (MNVKLVSYTR…PRLFRYVGPN (202 aa)). Residues Ser55, 79–81 (RHR), and Gln87 each bind FAD. Residues 76-79 (QLVR), 87-91 (QMSHR), and Arg141 contribute to the dUMP site. The short motif at 79–89 (RHRVASYTQMS) is the ThyX motif element. FAD contacts are provided by residues 157–159 (NAR) and Asn163. Arg168 provides a ligand contact to dUMP. Arg168 serves as the catalytic Involved in ionization of N3 of dUMP, leading to its activation.

It belongs to the thymidylate synthase ThyX family. As to quaternary structure, homotetramer. FAD serves as cofactor.

It catalyses the reaction dUMP + (6R)-5,10-methylene-5,6,7,8-tetrahydrofolate + NADPH + H(+) = dTMP + (6S)-5,6,7,8-tetrahydrofolate + NADP(+). Its pathway is pyrimidine metabolism; dTTP biosynthesis. Catalyzes the reductive methylation of 2'-deoxyuridine-5'-monophosphate (dUMP) to 2'-deoxythymidine-5'-monophosphate (dTMP) while utilizing 5,10-methylenetetrahydrofolate (mTHF) as the methyl donor, and NADPH and FADH(2) as the reductant. The chain is Flavin-dependent thymidylate synthase from Sulfurisphaera tokodaii (strain DSM 16993 / JCM 10545 / NBRC 100140 / 7) (Sulfolobus tokodaii).